Consider the following 295-residue polypeptide: uncharacterized protein (295 aa).

The signal sequence occupies residues 1-19 (MHKLLLIITVFSTFNVAQA).

This is an uncharacterized protein from Rickettsia typhi (strain ATCC VR-144 / Wilmington).